The sequence spans 398 residues: tRNA(Ile)-lysidine synthase (398 aa).

An ATP-binding site is contributed by 25–30 (SGGVDS).

The protein belongs to the tRNA(Ile)-lysidine synthase family.

The protein resides in the cytoplasm. The catalysed reaction is cytidine(34) in tRNA(Ile2) + L-lysine + ATP = lysidine(34) in tRNA(Ile2) + AMP + diphosphate + H(+). Its function is as follows. Ligates lysine onto the cytidine present at position 34 of the AUA codon-specific tRNA(Ile) that contains the anticodon CAU, in an ATP-dependent manner. Cytidine is converted to lysidine, thus changing the amino acid specificity of the tRNA from methionine to isoleucine. The sequence is that of tRNA(Ile)-lysidine synthase from Francisella tularensis subsp. novicida (strain U112).